The chain runs to 195 residues: MSKLYFSYATMNAGKSTLLLQAAYNYQERGMRVVMLIAAFDDRAGQGRIASRIGLESEAIPFRAEDDLHGLIERLNGDGSGEIACVFVDEAQFLGEDQVWQLARVADRLGIPVMAYGLRTDFQGKLFPGSMALLAIADELREVRTICHCGRKATMVVRLDGRGKVMREGAQVDVGGNEKYVSYCRRHWDDRMREG.

ATP contacts are provided by residues 9–16 and 89–92; these read ATMNAGKS and DEAQ. Glu90 acts as the Proton acceptor in catalysis. Zn(2+) contacts are provided by Cys147, Cys149, Cys184, and His187.

The protein belongs to the thymidine kinase family. In terms of assembly, homotetramer.

The protein resides in the cytoplasm. The enzyme catalyses thymidine + ATP = dTMP + ADP + H(+). This Rhizobium meliloti (strain 1021) (Ensifer meliloti) protein is Thymidine kinase.